We begin with the raw amino-acid sequence, 543 residues long: Acrosin-binding protein (543 aa).

A signal peptide spans 1-25 (MGQPAAGSILTLLRVLLLPLGPALA). Residues 26–106 (QDSPSAPTPG…ASWFESFCQF (81 aa)) form a pro-ACR binding region. Positions 26 to 276 (QDSPSAPTPG…DPHSFTARVR (251 aa)) are cleaved as a propeptide — removed in mature form. The segment at 187 to 239 (AGQEQAAGHKQEQGQEQHKQDPTQEHKQDDGQEQEEQEEEQEEEGKQEEGQSV) is disordered. Positions 193–216 (AGHKQEQGQEQHKQDPTQEHKQDD) are enriched in basic and acidic residues. The span at 217–232 (GQEQEEQEEEQEEEGK) shows a compositional bias: acidic residues. The tract at residues 319 to 427 (LPHKEALLVL…TQAGTSESGR (109 aa)) is pro-ACR binding.

As to quaternary structure, binds proacrosin (ACR). Does not bind the mature form of ACR. In terms of processing, the N-terminus is blocked. Phosphorylated on Tyr residues in capacitated sperm. Post-translationally, synthesized as a 60-kDa precursor, the 32-kDa mature form is post-translationally produced by the removal of the N-terminal half of the precursor during sperm maturation in the testis and/or epididymis. In terms of tissue distribution, specifically expressed in testis.

It is found in the secreted. The protein resides in the cytoplasmic vesicle. Its subcellular location is the secretory vesicle. It localises to the acrosome. Its function is as follows. Acrosomal protein that maintains proacrosin (pro-ACR) as an enzymatically inactive zymogen in the acrosome. Involved also in the acrosome formation. The protein is Acrosin-binding protein (ACRBP) of Cavia porcellus (Guinea pig).